A 319-amino-acid polypeptide reads, in one-letter code: Forkhead box protein E3 (319 aa).

The interval 1-69 (MAGRSDMDPP…GRRRRRPLQR (69 aa)) is disordered. The segment covering 44–53 (AAAGRGEAAP) has biased composition (low complexity). Residues 71–165 (KPPYSYIALI…DNGSFLRRRK (95 aa)) constitute a DNA-binding region (fork-head).

The protein localises to the nucleus. Its function is as follows. Transcription factor that controls lens epithelial cell growth through regulation of proliferation, apoptosis and cell cycle. During lens development, controls the ratio of the lens fiber cells to the cells of the anterior lens epithelium by regulating the rate of proliferation and differentiation. Controls lens vesicle closure and subsequent separation of the lens vesicle from ectoderm. Controls the expression of DNAJB1 in a pathway that is crucial for the development of the anterior segment of the eye. The sequence is that of Forkhead box protein E3 (FOXE3) from Homo sapiens (Human).